The chain runs to 82 residues: MSSTAAKKDVKSSAVPVTAVVEKKEFEEEEFEEFPVQEWAERAEGEEDDVNVWEDNWDDETHESEFSKQLKEELRKSGHQVA.

Residues 56 to 82 (NWDDETHESEFSKQLKEELRKSGHQVA) are disordered. Over residues 63 to 76 (ESEFSKQLKEELRK) the composition is skewed to basic and acidic residues.

The protein belongs to the DSS1/SEM1 family. In terms of assembly, part of the 26S proteasome. In terms of tissue distribution, expressed in intestinal epithelium and head neurons.

It localises to the nucleus. Its subcellular location is the cytoplasm. In terms of biological role, subunit of the 26S proteasome which plays a role in ubiquitin-dependent proteolysis. Has an essential role in oogenesis and larval growth. Required for intestinal function and default lifespan. This chain is Probable 26S proteasome complex subunit dss-1 (dss-1), found in Caenorhabditis elegans.